Reading from the N-terminus, the 210-residue chain is Syntaxin-binding protein 6 (210 aa).

S2 is modified (N-acetylserine). A v-SNARE coiled-coil homology domain is found at 151 to 210 (GNSILHSAADSVTSAVQKASQALNERGERLGRAEEKTEDLKNSAQQFAETAHKLAMKHKC).

In terms of assembly, part of a ternary complex containing SNAP25 and STX1A that can be dissociated by NAPA and NSF. Interacts with STX4A. In terms of tissue distribution, detected at low levels in brain, and at very low levels in heart, adrenal gland, testis, liver and kidney.

Its subcellular location is the cytoplasm. The protein resides in the membrane. Its function is as follows. Forms non-fusogenic complexes with SNAP25 and STX1A and may thereby modulate the formation of functional SNARE complexes and exocytosis. The protein is Syntaxin-binding protein 6 (STXBP6) of Homo sapiens (Human).